Reading from the N-terminus, the 245-residue chain is 2,3-bisphosphoglycerate-dependent phosphoglycerate mutase (245 aa).

Substrate is bound by residues 8 to 15 (RHGQSLWN), 21 to 22 (TG), R60, 87 to 90 (ERHY), K98, 114 to 115 (RR), and 183 to 184 (GN). H9 functions as the Tele-phosphohistidine intermediate in the catalytic mechanism. The Proton donor/acceptor role is filled by E87.

Belongs to the phosphoglycerate mutase family. BPG-dependent PGAM subfamily.

The catalysed reaction is (2R)-2-phosphoglycerate = (2R)-3-phosphoglycerate. Its pathway is carbohydrate degradation; glycolysis; pyruvate from D-glyceraldehyde 3-phosphate: step 3/5. In terms of biological role, catalyzes the interconversion of 2-phosphoglycerate and 3-phosphoglycerate. This chain is 2,3-bisphosphoglycerate-dependent phosphoglycerate mutase, found in Bacillus cytotoxicus (strain DSM 22905 / CIP 110041 / 391-98 / NVH 391-98).